We begin with the raw amino-acid sequence, 120 residues long: Small ribosomal subunit protein bS6 (120 aa).

The span at 97-112 (SNEPSPILKNQSTENT) shows a compositional bias: polar residues. The tract at residues 97–120 (SNEPSPILKNQSTENTPVIDVTAN) is disordered.

It belongs to the bacterial ribosomal protein bS6 family.

Functionally, binds together with bS18 to 16S ribosomal RNA. This chain is Small ribosomal subunit protein bS6, found in Rickettsia bellii (strain RML369-C).